Here is a 294-residue protein sequence, read N- to C-terminus: Indole-3-glycerol phosphate synthase (294 aa).

This sequence belongs to the TrpC family.

It catalyses the reaction 1-(2-carboxyphenylamino)-1-deoxy-D-ribulose 5-phosphate + H(+) = (1S,2R)-1-C-(indol-3-yl)glycerol 3-phosphate + CO2 + H2O. It participates in amino-acid biosynthesis; L-tryptophan biosynthesis; L-tryptophan from chorismate: step 4/5. The protein is Indole-3-glycerol phosphate synthase of Synechococcus sp. (strain CC9902).